Consider the following 747-residue polypeptide: Histone-lysine N-methyltransferase EZH1 (747 aa).

Residues 188–231 (DEEEEGHNDTSDGKQDDSKEDLPVTRKRKRHAIEGNKKSSKKQF) are disordered. The segment covering 194–211 (HNDTSDGKQDDSKEDLPV) has biased composition (basic and acidic residues). Residue K327 forms a Glycyl lysine isopeptide (Lys-Gly) (interchain with G-Cter in SUMO2) linkage. The interval 378–421 (SAVAETKEGDSDRDTGNDWASSSSEANSRCQTPTKQKASPAPPQ) is disordered. Basic and acidic residues predominate over residues 382-393 (ETKEGDSDRDTG). Residues 395-414 (DWASSSSEANSRCQTPTKQK) are compositionally biased toward polar residues. A Nuclear localization signal motif is present at residues 491 to 496 (QKKKRK). Residues 504 to 606 (CRKIQLKKDN…CKVVSCKNCS (103 aa)) enclose the CXC domain. The SET domain maps to 613–728 (KHLLLAPSDV…AGEELFLDYR (116 aa)).

Belongs to the class V-like SAM-binding methyltransferase superfamily. Histone-lysine methyltransferase family. EZ subfamily. Component of the PRC2/EED-EZH1 complex, which includes EED, EZH1, SUZ12, RBBP4 and AEBP2. The PRC2/EED-EZH1 is less abundant than the PRC2/EED-EZH2 complex, has weak methyltransferase activity and compacts chromatin in the absence of the methyltransferase cofactor S-adenosyl-L-methionine (SAM). Interacts with EZHIP; the interaction blocks EZH1 methyltransferase activity.

The protein localises to the nucleus. It catalyses the reaction L-lysyl(27)-[histone H3] + 3 S-adenosyl-L-methionine = N(6),N(6),N(6)-trimethyl-L-lysyl(27)-[histone H3] + 3 S-adenosyl-L-homocysteine + 3 H(+). In terms of biological role, polycomb group (PcG) protein. Catalytic subunit of the PRC2/EED-EZH1 complex, which methylates 'Lys-27' of histone H3, leading to transcriptional repression of the affected target gene. Able to mono-, di- and trimethylate 'Lys-27' of histone H3 to form H3K27me1, H3K27me2 and H3K27me3, respectively. Required for embryonic stem cell derivation and self-renewal, suggesting that it is involved in safeguarding embryonic stem cell identity. Compared to EZH2-containing complexes, it is less abundant in embryonic stem cells, has weak methyltransferase activity and plays a less critical role in forming H3K27me3, which is required for embryonic stem cell identity and proper differentiation. This chain is Histone-lysine N-methyltransferase EZH1 (EZH1), found in Pongo abelii (Sumatran orangutan).